A 189-amino-acid polypeptide reads, in one-letter code: ATP-dependent protease subunit HslV (189 aa).

Thr12 is a catalytic residue. Ser172, Cys175, and Thr178 together coordinate Na(+).

This sequence belongs to the peptidase T1B family. HslV subfamily. In terms of assembly, a double ring-shaped homohexamer of HslV is capped on each side by a ring-shaped HslU homohexamer. The assembly of the HslU/HslV complex is dependent on binding of ATP.

The protein resides in the cytoplasm. It carries out the reaction ATP-dependent cleavage of peptide bonds with broad specificity.. With respect to regulation, allosterically activated by HslU binding. In terms of biological role, protease subunit of a proteasome-like degradation complex believed to be a general protein degrading machinery. The protein is ATP-dependent protease subunit HslV of Ehrlichia canis (strain Jake).